The sequence spans 499 residues: Glycerol kinase (499 aa).

Threonine 12 contacts ADP. The ATP site is built by threonine 12, threonine 13, and serine 14. Threonine 12 lines the sn-glycerol 3-phosphate pocket. Arginine 16 lines the ADP pocket. Arginine 82, glutamate 83, tyrosine 135, and aspartate 245 together coordinate sn-glycerol 3-phosphate. Residues arginine 82, glutamate 83, tyrosine 135, aspartate 245, and glutamine 246 each contribute to the glycerol site. Residues threonine 267 and glycine 310 each coordinate ADP. Residues threonine 267, glycine 310, glutamine 314, and glycine 411 each coordinate ATP. Glycine 411 and asparagine 415 together coordinate ADP.

The protein belongs to the FGGY kinase family. In terms of assembly, homotetramer and homodimer (in equilibrium).

It catalyses the reaction glycerol + ATP = sn-glycerol 3-phosphate + ADP + H(+). Its pathway is polyol metabolism; glycerol degradation via glycerol kinase pathway; sn-glycerol 3-phosphate from glycerol: step 1/1. Its activity is regulated as follows. Activated by phosphorylation and inhibited by fructose 1,6-bisphosphate (FBP). Functionally, key enzyme in the regulation of glycerol uptake and metabolism. Catalyzes the phosphorylation of glycerol to yield sn-glycerol 3-phosphate. In Clostridium beijerinckii (strain ATCC 51743 / NCIMB 8052) (Clostridium acetobutylicum), this protein is Glycerol kinase.